We begin with the raw amino-acid sequence, 240 residues long: DNA repair protein RecO (240 aa).

Belongs to the RecO family.

In terms of biological role, involved in DNA repair and RecF pathway recombination. The polypeptide is DNA repair protein RecO (Actinobacillus pleuropneumoniae serotype 5b (strain L20)).